The primary structure comprises 172 residues: Translation initiation factor IF-3 (172 aa).

The protein belongs to the IF-3 family. In terms of assembly, monomer.

It is found in the cytoplasm. In terms of biological role, IF-3 binds to the 30S ribosomal subunit and shifts the equilibrium between 70S ribosomes and their 50S and 30S subunits in favor of the free subunits, thus enhancing the availability of 30S subunits on which protein synthesis initiation begins. The polypeptide is Translation initiation factor IF-3 (Campylobacter curvus (strain 525.92)).